The sequence spans 376 residues: tRNA-specific 2-thiouridylase MnmA (376 aa).

ATP is bound by residues Gly-19–Ser-26 and Met-45. An interaction with target base in tRNA region spans residues Asn-105–Asp-107. The active-site Nucleophile is the Cys-110. A disulfide bridge connects residues Cys-110 and Cys-210. Gly-134 serves as a coordination point for ATP. The interval Lys-160–Gln-162 is interaction with tRNA. The Cysteine persulfide intermediate role is filled by Cys-210. Positions Arg-326 to Tyr-327 are interaction with tRNA.

The protein belongs to the MnmA/TRMU family.

It is found in the cytoplasm. The catalysed reaction is S-sulfanyl-L-cysteinyl-[protein] + uridine(34) in tRNA + AH2 + ATP = 2-thiouridine(34) in tRNA + L-cysteinyl-[protein] + A + AMP + diphosphate + H(+). Catalyzes the 2-thiolation of uridine at the wobble position (U34) of tRNA, leading to the formation of s(2)U34. This is tRNA-specific 2-thiouridylase MnmA from Bordetella petrii (strain ATCC BAA-461 / DSM 12804 / CCUG 43448).